Consider the following 278-residue polypeptide: E3 ubiquitin-protein ligase CHIP (278 aa).

TPR repeat units lie at residues 10 to 43 (AERL…SPNV), 45 to 77 (AYWT…VHNS), and 78 to 111 (VKAH…GRCS). Residues 143-194 (ELNSLKETCEAALNQQRALDMSRTEESSDEAYTAHTERLKALERVFKKAAEE) adopt a coiled-coil conformation. The 75-residue stretch at 199–273 (EVPDYLCCNI…AAYLEKHVWA (75 aa)) folds into the U-box domain.

Interacts with HSC70-4, PP2AA1, PP2AA3 and PP2A5, as well as with UBC8, UBC9 and UBC10. Also interacts with the chloroplastic proteolytic subunits ClpP4, FtsH1 and FtsH2.

It catalyses the reaction S-ubiquitinyl-[E2 ubiquitin-conjugating enzyme]-L-cysteine + [acceptor protein]-L-lysine = [E2 ubiquitin-conjugating enzyme]-L-cysteine + N(6)-ubiquitinyl-[acceptor protein]-L-lysine.. The protein operates within protein modification; protein ubiquitination. Functionally, has E3 ubiquitin-protein ligase activity and may target misfolded substrates towards proteasomal degradation. Regulates the activity of some serine/threonine-protein phosphatases by E3 ubiquitin-protein ligase activity. Required for responses to biotic and abiotic stresses such as auxin, abscisic acid (ABA), low and high temperature and darkness, probably through the activation of serine/threonine-protein phosphatase and the subsequent modification of the plasma membrane composition. Regulates the chloroplastic Clp proteolytic activity in response to stresses. Ubiquitylates FtsH1, a component of the chloroplast FtsH protease, and affects protein degradation in chloroplasts. Mediates plastid precursor degradation to prevent cytosolic precursor accumulation, together with the molecular chaperone HSC70-4. Mediates ubiquitination of transit peptides and thereby led to their degradation through the ubiquitin-proteasome system. The chain is E3 ubiquitin-protein ligase CHIP from Arabidopsis thaliana (Mouse-ear cress).